The primary structure comprises 634 residues: Endoribonuclease rege-1 (634 aa).

3 disordered regions span residues 1–33, 90–113, and 156–223; these read MDSTARGHAPLCRTSNQRGLGTRLNPYYQSTPH, SHPSLSRESSDPSKIDDDQTAPMI, and KMGL…NPDP. A compositionally biased stretch (basic and acidic residues) spans 97-106; sequence ESSDPSKIDD. Composition is skewed to low complexity over residues 182–194 and 201–217; these read SSASSSSASSSSS and SVSIATSSPATSSSTPS. One can recognise an RNase NYN domain in the interval 225–377; sequence LRAVVVDGSN…PSGRHGPRIE (153 aa). Aspartate 314 serves as a coordination point for Mg(2+). A C3H1-type zinc finger spans residues 387–412; the sequence is SSNPLVCPYARKCTYGNKCKFYHPER.

The protein belongs to the ZC3H12 family. It depends on Mg(2+) as a cofactor. As to expression, expressed in the intestinal cells adjacent to the pharynx.

The protein resides in the cytoplasm. In terms of biological role, endonuclease which binds to the 3'UTR of target mRNAs and induces degradation of the transcript. Acts together with rle-1 to repress the expression of the transcription factor ets-4 by binding to the conserved ADE (alternate decay element) and RCE (REGE-1 cleavage element) stem loop structure in its 3'UTR, which controls the expression of genes in the IIS and TORC1 pathways, including those involved in lipid metabolism and autophagosome formation. May play a role in the clearance of apoptotic cell corpses. The chain is Endoribonuclease rege-1 from Caenorhabditis elegans.